The primary structure comprises 200 residues: 3-isopropylmalate dehydratase small subunit (200 aa).

The protein belongs to the LeuD family. LeuD type 1 subfamily. As to quaternary structure, heterodimer of LeuC and LeuD.

The enzyme catalyses (2R,3S)-3-isopropylmalate = (2S)-2-isopropylmalate. Its pathway is amino-acid biosynthesis; L-leucine biosynthesis; L-leucine from 3-methyl-2-oxobutanoate: step 2/4. In terms of biological role, catalyzes the isomerization between 2-isopropylmalate and 3-isopropylmalate, via the formation of 2-isopropylmaleate. This chain is 3-isopropylmalate dehydratase small subunit, found in Haemophilus influenzae (strain 86-028NP).